Here is a 247-residue protein sequence, read N- to C-terminus: Triosephosphate isomerase (247 aa).

Substrate is bound at residue 10-12 (NWK). The Electrophile role is filled by histidine 92. Glutamate 164 acts as the Proton acceptor in catalysis. Substrate is bound by residues glycine 170, serine 209, and 230–231 (GG).

It belongs to the triosephosphate isomerase family. Homodimer.

The protein localises to the cytoplasm. The catalysed reaction is D-glyceraldehyde 3-phosphate = dihydroxyacetone phosphate. It participates in carbohydrate biosynthesis; gluconeogenesis. It functions in the pathway carbohydrate degradation; glycolysis; D-glyceraldehyde 3-phosphate from glycerone phosphate: step 1/1. Functionally, involved in the gluconeogenesis. Catalyzes stereospecifically the conversion of dihydroxyacetone phosphate (DHAP) to D-glyceraldehyde-3-phosphate (G3P). The chain is Triosephosphate isomerase from Alcanivorax borkumensis (strain ATCC 700651 / DSM 11573 / NCIMB 13689 / SK2).